The primary structure comprises 275 residues: Large ribosomal subunit protein uL2 (275 aa).

Positions 36–49 (TQSSTAGRNNNGRI) are enriched in polar residues. Disordered stretches follow at residues 36-59 (TQSSTAGRNNNGRITTRHKGGGHK) and 224-275 (AMNP…RHKR). Positions 50–59 (TTRHKGGGHK) are enriched in basic residues.

It belongs to the universal ribosomal protein uL2 family. As to quaternary structure, part of the 50S ribosomal subunit. Forms a bridge to the 30S subunit in the 70S ribosome.

Functionally, one of the primary rRNA binding proteins. Required for association of the 30S and 50S subunits to form the 70S ribosome, for tRNA binding and peptide bond formation. It has been suggested to have peptidyltransferase activity; this is somewhat controversial. Makes several contacts with the 16S rRNA in the 70S ribosome. The protein is Large ribosomal subunit protein uL2 of Burkholderia vietnamiensis (strain G4 / LMG 22486) (Burkholderia cepacia (strain R1808)).